A 729-amino-acid chain; its full sequence is Cellulose synthase-like protein E1 (729 aa).

Transmembrane regions (helical) follow at residues valine 29–tyrosine 49 and leucine 64–glutamine 84. Catalysis depends on residues aspartate 152 and aspartate 443. Transmembrane regions (helical) follow at residues leucine 526–phenylalanine 546, tryptophan 553–leucine 573, methionine 644–alanine 664, glutamine 680–leucine 700, and methionine 709–leucine 729.

It belongs to the glycosyltransferase 2 family. Plant cellulose synthase-like E subfamily.

It localises to the golgi apparatus membrane. In terms of biological role, thought to be a Golgi-localized beta-glycan synthase that polymerize the backbones of noncellulosic polysaccharides (hemicelluloses) of plant cell wall. In Arabidopsis thaliana (Mouse-ear cress), this protein is Cellulose synthase-like protein E1 (CSLE1).